Consider the following 234-residue polypeptide: Orotidine 5'-phosphate decarboxylase (234 aa).

Substrate is bound by residues Asp14, Lys36, 63–72 (DLKFHDIPNT), Thr123, Arg184, Gln193, Gly213, and Arg214. Lys65 serves as the catalytic Proton donor.

It belongs to the OMP decarboxylase family. Type 1 subfamily. As to quaternary structure, homodimer.

The catalysed reaction is orotidine 5'-phosphate + H(+) = UMP + CO2. Its pathway is pyrimidine metabolism; UMP biosynthesis via de novo pathway; UMP from orotate: step 2/2. Functionally, catalyzes the decarboxylation of orotidine 5'-monophosphate (OMP) to uridine 5'-monophosphate (UMP). This Pseudoalteromonas translucida (strain TAC 125) protein is Orotidine 5'-phosphate decarboxylase.